We begin with the raw amino-acid sequence, 190 residues long: RNA-binding protein OPG065 (190 aa).

Residues 5–70 form the Z-binding domain; that stretch reads YIDERSDAEI…DIPPRWFMTT (66 aa). Residues 117 to 184 enclose the DRBM domain; the sequence is NPVTIINEYC…AKLAVDKLLG (68 aa).

It belongs to the orthopoxvirus OPG065 family. In terms of assembly, interacts with host G1P2/ISG15. Interacts with host EIF2AK2/PKR. Interacts with host ZBP1.

Its function is as follows. RNA-binding protein that plays a role in the inhibition of multiple cellular antiviral responses activated by double-stranded RNA (dsRNA), such as inhibition of PKR activation, necroptosis, and IFN-mediated antiviral activities. Recognizes and binds Z-RNA structures via its Z-binding domain and dsRNA via its DRBM domain: RNA-binding activity is required to escape host ZBP1-dependent necroptosis. Mechanistically, the Z-binding domain binds Z-RNAs that are produced during vaccinia virus infection, thereby competing with Z-RNA detection by host ZBP1, suppressing ZBP1-dependent necroptosis. Acts as a key inhibitor of the interferon response by blocking the phosphorylation and subsequent activation of IRF3 and IRF7 kinases that are required for interferon-alpha gene expression. Inhibits NF-kappa-B activation and the ubiquitin-like protein ISG15, which is an early antiviral protein. The binding with host ISG15 subsequently blocks host ISGylation. This is RNA-binding protein OPG065 (OPG065) from Homo sapiens (Human).